Here is a 416-residue protein sequence, read N- to C-terminus: Putative L-glutamine:3-amino-2,3-dideoxy-scyllo-inosose aminotransferase (416 aa).

K199 bears the N6-(pyridoxal phosphate)lysine mark.

The protein belongs to the DegT/DnrJ/EryC1 family. L-glutamine:2-deoxy-scyllo-inosose/scyllo-inosose aminotransferase subfamily. The cofactor is pyridoxal 5'-phosphate.

The enzyme catalyses 3-amino-2,3-dideoxy-scyllo-inosose + L-glutamine = 2-deoxystreptamine + 2-oxoglutaramate. It functions in the pathway metabolic intermediate biosynthesis; 2-deoxystreptamine biosynthesis; 2-deoxystreptamine from D-glucose 6-phosphate: step 4/4. The protein operates within antibiotic biosynthesis; tobramycin biosynthesis. Its function is as follows. Catalyzes the transamination of 3-amino-2,3-dideoxy-scyllo-inosose (amino-DOI) into 2-deoxystreptamine (DOS). This Streptoalloteichus tenebrarius (strain ATCC 17920 / DSM 40477 / JCM 4838 / CBS 697.72 / NBRC 16177 / NCIMB 11028 / NRRL B-12390 / A12253. 1 / ISP 5477) (Streptomyces tenebrarius) protein is Putative L-glutamine:3-amino-2,3-dideoxy-scyllo-inosose aminotransferase (tobS2).